Here is a 379-residue protein sequence, read N- to C-terminus: Tryptophan 2,3-dioxygenase (379 aa).

Substrate-binding positions include 57-61 and Arg128; that span reads FIITH. His312 contacts heme. Residue Thr327 coordinates substrate.

Belongs to the tryptophan 2,3-dioxygenase family. As to quaternary structure, homotetramer. Dimer of dimers. Requires heme as cofactor.

The catalysed reaction is L-tryptophan + O2 = N-formyl-L-kynurenine. The protein operates within amino-acid degradation; L-tryptophan degradation via kynurenine pathway; L-kynurenine from L-tryptophan: step 1/2. It participates in pigment biosynthesis; ommochrome biosynthesis. In terms of biological role, heme-dependent dioxygenase that catalyzes the oxidative cleavage of the L-tryptophan (L-Trp) pyrrole ring and converts L-tryptophan to N-formyl-L-kynurenine. Catalyzes the oxidative cleavage of the indole moiety. The sequence is that of Tryptophan 2,3-dioxygenase from Drosophila yakuba (Fruit fly).